The following is a 509-amino-acid chain: uncharacterized protein (509 aa).

Residues 108–225 form the G domain; that stretch reads GKSSLCNLLA…KRHKPLFPVI (118 aa).

This is an uncharacterized protein from Acinetobacter baylyi (strain ATCC 33305 / BD413 / ADP1).